Reading from the N-terminus, the 569-residue chain is Acyl-CoA-binding domain-containing protein 5 (569 aa).

The N-terminal stretch at Met1–Ala31 is a signal peptide. Positions Ile415–Gly506 constitute an ACB domain. An acyl-CoA is bound by residues Lys474 and Tyr493. A glycan (N-linked (GlcNAc...) asparagine) is linked at Asn508. 2 stretches are compositionally biased toward polar residues: residues Ile533–Asn544 and Leu552–Glu569. Residues Ile533–Glu569 are disordered.

This sequence belongs to the ACBP family. In terms of tissue distribution, highly expressed in seeds and leaves. Expressed at low levels in roots.

Its subcellular location is the endoplasmic reticulum. Its function is as follows. Binds medium- and long-chain acyl-CoA esters with high affinity. Can interact in vitro with palmitoyl-CoA and linolenoyl-CoA. Binds phosphatidic acid (PA) and phosphatidylcholine (PC) in vitro. May play a role in the biosynthesis of phospholipids. The polypeptide is Acyl-CoA-binding domain-containing protein 5 (Oryza sativa subsp. japonica (Rice)).